The following is a 287-amino-acid chain: Fructose-1,6-bisphosphatase class 1 (287 aa).

Glu-67, Asp-86, Leu-88, and Asp-89 together coordinate Mg(2+). Substrate contacts are provided by residues 89 to 92, Tyr-195, and Lys-226; that span reads DGSS. Glu-232 is a Mg(2+) binding site.

Belongs to the FBPase class 1 family. Homotetramer. The cofactor is Mg(2+).

It localises to the cytoplasm. The catalysed reaction is beta-D-fructose 1,6-bisphosphate + H2O = beta-D-fructose 6-phosphate + phosphate. It participates in carbohydrate biosynthesis; gluconeogenesis. The chain is Fructose-1,6-bisphosphatase class 1 from Campylobacter concisus (strain 13826).